The primary structure comprises 107 residues: Essential MCU regulator, mitochondrial (107 aa).

The transit peptide at 1-47 (MASTAARRLAWVAVRPGALWSGPRGRRGGDVYTVPGSSGLSQVPSRS) directs the protein to the mitochondrion. The Mitochondrial matrix portion of the chain corresponds to 48–65 (VIVTRSGAILPKPVKMSF). Residues 66 to 85 (GLLRVFSIVIPFLYVGTLIS) traverse the membrane as a helical segment. The GXXXX[G/A/S] signature appears at 81-85 (GTLIS). The Mitochondrial intermembrane segment spans residues 86–107 (KNFAALLEEHDIFVPEDDDDDD).

It belongs to the SMDT1/EMRE family. As to quaternary structure, component of the uniplex complex, composed of MCU, EMRE/SMDT1, MICU1 and MICU2 (or MICU3) in a 4:4:1:1 stoichiometry. The number of EMRE/SMDT1 molecules is hovewer variable, ranging from 1 to 4 copies per uniplex complex, leading to uniplex complexes with distinct gatekeeping profiles. Interacts (via its C-terminal poly-Asp tail) with MCUR1; the interaction is direct. Unprocessed form interacts (via transit peptide) with MAIP1. In terms of processing, undergoes proteolytic degradation in neurons: degraded by AFG3L2 and SPG7 before SMDT1/EMRE assembly with the uniporter complex, limiting the availability of SMDT1/EMRE for MCU assembly and promoting efficient assembly of gatekeeper subunits with MCU. In terms of tissue distribution, widely expressed.

The protein resides in the mitochondrion inner membrane. Essential regulatory subunit of the mitochondrial calcium uniporter complex (uniplex), a complex that mediates calcium uptake into mitochondria. Required to bridge the calcium-sensing proteins MICU1 with the calcium-conducting subunit MCU. Acts by mediating activation of MCU and retention of MICU1 to the MCU pore, in order to ensure tight regulation of the uniplex complex and appropriate responses to intracellular calcium signaling. The protein is Essential MCU regulator, mitochondrial of Mus musculus (Mouse).